Here is a 391-residue protein sequence, read N- to C-terminus: Glycerol-3-phosphate dehydrogenase [NAD(+)] (391 aa).

NAD(+)-binding positions include 46–51 (GSGNWG), phenylalanine 78, and phenylalanine 134. Position 157 (lysine 157) interacts with substrate. Alanine 190 contacts NAD(+). Residue lysine 250 is the Proton acceptor of the active site. The NAD(+) site is built by arginine 315 and glutamine 344. Residue 315–316 (RN) participates in substrate binding.

This sequence belongs to the NAD-dependent glycerol-3-phosphate dehydrogenase family.

The catalysed reaction is sn-glycerol 3-phosphate + NAD(+) = dihydroxyacetone phosphate + NADH + H(+). The sequence is that of Glycerol-3-phosphate dehydrogenase [NAD(+)] (GPD) from Candida tropicalis (Yeast).